Reading from the N-terminus, the 152-residue chain is MKLILTADVDHLGSVGDTVEVKDGYGRNFLLPRGMAIVASRGAQKQADEIRRSRETKAVRDREHANEIKTAIQALGSVALPVKTAADSGKLFGSVTAGDVVAAIKKAGGPNLDKRIVRLPKAHIKAVGTHPVVMHLHPEIEVELSVDVVAES.

This sequence belongs to the bacterial ribosomal protein bL9 family.

Binds to the 23S rRNA. The chain is Large ribosomal subunit protein bL9 from Mycobacterium marinum (strain ATCC BAA-535 / M).